We begin with the raw amino-acid sequence, 282 residues long: Bifunctional protein FolD (282 aa).

NADP(+) is bound by residues 164 to 166 (GRS) and Ser189.

It belongs to the tetrahydrofolate dehydrogenase/cyclohydrolase family. In terms of assembly, homodimer.

The catalysed reaction is (6R)-5,10-methylene-5,6,7,8-tetrahydrofolate + NADP(+) = (6R)-5,10-methenyltetrahydrofolate + NADPH. The enzyme catalyses (6R)-5,10-methenyltetrahydrofolate + H2O = (6R)-10-formyltetrahydrofolate + H(+). It participates in one-carbon metabolism; tetrahydrofolate interconversion. Functionally, catalyzes the oxidation of 5,10-methylenetetrahydrofolate to 5,10-methenyltetrahydrofolate and then the hydrolysis of 5,10-methenyltetrahydrofolate to 10-formyltetrahydrofolate. The chain is Bifunctional protein FolD from Anaeromyxobacter dehalogenans (strain 2CP-C).